The following is a 114-amino-acid chain: UPF0757 protein YmgG (114 aa).

Belongs to the UPF0757 family.

This chain is UPF0757 protein YmgG, found in Escherichia fergusonii (strain ATCC 35469 / DSM 13698 / CCUG 18766 / IAM 14443 / JCM 21226 / LMG 7866 / NBRC 102419 / NCTC 12128 / CDC 0568-73).